A 708-amino-acid polypeptide reads, in one-letter code: tRNA 5-methylaminomethyl-2-thiouridine biosynthesis bifunctional protein MnmC (708 aa).

Positions 1–278 are tRNA (mnm(5)s(2)U34)-methyltransferase; it reads MTAEPNKPCQ…ERQVLRQQDA (278 aa). Residues 301-708 form an FAD-dependent cmnm(5)s(2)U34 oxidoreductase region; it reads IGGGLASAHL…LRKLLKGKAL (408 aa).

The protein in the N-terminal section; belongs to the methyltransferase superfamily. tRNA (mnm(5)s(2)U34)-methyltransferase family. In the C-terminal section; belongs to the DAO family. Requires FAD as cofactor.

Its subcellular location is the cytoplasm. It catalyses the reaction 5-aminomethyl-2-thiouridine(34) in tRNA + S-adenosyl-L-methionine = 5-methylaminomethyl-2-thiouridine(34) in tRNA + S-adenosyl-L-homocysteine + H(+). Functionally, catalyzes the last two steps in the biosynthesis of 5-methylaminomethyl-2-thiouridine (mnm(5)s(2)U) at the wobble position (U34) in tRNA. Catalyzes the FAD-dependent demodification of cmnm(5)s(2)U34 to nm(5)s(2)U34, followed by the transfer of a methyl group from S-adenosyl-L-methionine to nm(5)s(2)U34, to form mnm(5)s(2)U34. The sequence is that of tRNA 5-methylaminomethyl-2-thiouridine biosynthesis bifunctional protein MnmC from Shewanella baltica (strain OS195).